The primary structure comprises 125 residues: UPF0102 protein Mpop_0474 (125 aa).

The protein belongs to the UPF0102 family.

This Methylorubrum populi (strain ATCC BAA-705 / NCIMB 13946 / BJ001) (Methylobacterium populi) protein is UPF0102 protein Mpop_0474.